The following is a 389-amino-acid chain: MNLHEYQAKQLFEHYGLPVKNGAVCQSVEDVDLVLAQLSGGKWAAKCQVHAGGRGKAGGVKLVQDVEEARAFAEKWLGQRLVTFQTDKLGQPVNQIYFEETCDIDKEFYLSAVVDRTSQKVVFIASSEGGMNIEEVVQNSPHLLHKVTIDPLFGGLPYQGRELAFKLGLSGTQNKQFTDIFMGLSRLFLEKDLSLLEVNPLVLTPQGNLVCLDAKISVDDNALFRHKDLLALQDLTQNDAREAEAEKFQLNYVALEGDIGCMVNGAGLAMGTMDIVKLYGGKPANFLDVGGGATQERVAEAFKIILTDPSVKVILVNIFGGIVRCDLIAEGVIAAVNEVGVRVPVVVRLEGTNAEMGRQILAESDVNILTAQSLQQAAELAVNAAKGEH.

In terms of domain architecture, ATP-grasp spans 9-244; the sequence is KQLFEHYGLP…LTQNDAREAE (236 aa). Residues Lys-46, 53 to 55, Glu-99, Cys-102, and Glu-107 contribute to the ATP site; that span reads GRG. Residues Asn-199 and Asp-213 each contribute to the Mg(2+) site. Residues Asn-264 and 321 to 323 contribute to the substrate site; that span reads GIV.

The protein belongs to the succinate/malate CoA ligase beta subunit family. Heterotetramer of two alpha and two beta subunits. Mg(2+) serves as cofactor.

It catalyses the reaction succinate + ATP + CoA = succinyl-CoA + ADP + phosphate. The catalysed reaction is GTP + succinate + CoA = succinyl-CoA + GDP + phosphate. It participates in carbohydrate metabolism; tricarboxylic acid cycle; succinate from succinyl-CoA (ligase route): step 1/1. Succinyl-CoA synthetase functions in the citric acid cycle (TCA), coupling the hydrolysis of succinyl-CoA to the synthesis of either ATP or GTP and thus represents the only step of substrate-level phosphorylation in the TCA. The beta subunit provides nucleotide specificity of the enzyme and binds the substrate succinate, while the binding sites for coenzyme A and phosphate are found in the alpha subunit. The sequence is that of Succinate--CoA ligase [ADP-forming] subunit beta from Haemophilus influenzae (strain ATCC 51907 / DSM 11121 / KW20 / Rd).